A 127-amino-acid polypeptide reads, in one-letter code: MAPGFHFSWLLVSWLVVTTVKGQDVMTPPGSQNNVNPTDCQIITLTPPPTTRNQLTRAQPVTRTPTFYFPPRRPGFYPRFPNIPFFPPNNRRFQLWPFYPPRGRLIPWRFFLGRRQLQSSSSEESLE.

Positions 1 to 23 are cleaved as a signal peptide; it reads MAPGFHFSWLLVSWLVVTTVKGQ.

As to expression, expressed in enamel organs and not expressed in the heart, kidney, or spleen.

The protein localises to the secreted. May promote nucleation of hydroxyapatite. The sequence is that of Odontogenesis-associated phosphoprotein from Rattus norvegicus (Rat).